A 154-amino-acid chain; its full sequence is Lipoprotein signal peptidase (154 aa).

The next 2 helical transmembrane spans lie at Gly-55–Met-75 and Leu-84–Val-104. Active-site residues include Asp-111 and Asp-129. A helical membrane pass occupies residues Ile-124–Phe-144.

The protein belongs to the peptidase A8 family.

The protein resides in the cell membrane. The enzyme catalyses Release of signal peptides from bacterial membrane prolipoproteins. Hydrolyzes -Xaa-Yaa-Zaa-|-(S,diacylglyceryl)Cys-, in which Xaa is hydrophobic (preferably Leu), and Yaa (Ala or Ser) and Zaa (Gly or Ala) have small, neutral side chains.. It participates in protein modification; lipoprotein biosynthesis (signal peptide cleavage). Its function is as follows. This protein specifically catalyzes the removal of signal peptides from prolipoproteins. In Listeria welshimeri serovar 6b (strain ATCC 35897 / DSM 20650 / CCUG 15529 / CIP 8149 / NCTC 11857 / SLCC 5334 / V8), this protein is Lipoprotein signal peptidase.